Consider the following 232-residue polypeptide: Probable intron-encoded endonuclease aI3 (232 aa).

This sequence belongs to the LAGLIDADG endonuclease family.

It localises to the mitochondrion. Its function is as follows. Mitochondrial DNA endonuclease involved in intron homing. This is Probable intron-encoded endonuclease aI3 (aI3) from Dictyostelium discoideum (Social amoeba).